Here is a 1492-residue protein sequence, read N- to C-terminus: Cystic fibrosis transmembrane conductance regulator (1492 aa).

The Cytoplasmic segment spans residues 1 to 78 (MQRSPIEKAN…KLVNALRRCF (78 aa)). The chain crosses the membrane as a helical span at residues 79–99 (FWRFLFYGILLYFVEFTKAVQ). In terms of domain architecture, ABC transmembrane type-1 1 spans 82 to 366 (FLFYGILLYF…SAIQTWYDSL (285 aa)). Residues 100 to 123 (PLCLGRIIASYNAKNTYEREIAYY) are Extracellular-facing. A helical transmembrane segment spans residues 124 to 147 (LALGLCLLFVVRTLFLHPAVFGLQ). Residues 148-196 (HLGMQMRIALFSLIYKKILKMSSRVLDKIDTGQLVSLLSNNLNKFDEGV) are Cytoplasmic-facing. A helical transmembrane segment spans residues 197-217 (AVAHFVWIAPVQVVLLMGLIW). The Extracellular portion of the chain corresponds to 218–223 (NELTEF). Residues 224-244 (VFCGLGFLIMLALFQAWLGKK) traverse the membrane as a helical segment. Residues 245–299 (MMQYRDKRAGKINERLAITSEIIDNIQSVKVYCWEDAMEKIIDDIRQVELKLTRK) lie on the Cytoplasmic side of the membrane. A helical transmembrane segment spans residues 300–320 (VAYCRYFSSSAFFFSGFFVVF). At 321 to 340 (LSVVPYAFIHTIKLRRIFTT) the chain is on the extracellular side. Residues 341 to 359 (ISYNIVLRMTVTRQFPSAI) traverse the membrane as a helical segment. Over 360 to 867 (QTWYDSLGAI…YLRYVTTNRN (508 aa)) the chain is Cytoplasmic. ATP contacts are provided by residues W402, S435, 459–466 (GSTGSGKS), and Q494. Residues 424-647 (NGDDGLFFSN…KPDFSSQLLG (224 aa)) form the ABC transporter 1 domain. The tract at residues 655 to 840 (SAERRNSILT…EEINEEDLKE (186 aa)) is disordered R region. A helical membrane pass occupies residues 868-888 (LVFVLILCLVIFLAEVAASLA). Residues 868 to 1169 (LVFVLILCLV…AVNSSIDVDG (302 aa)) form the ABC transmembrane type-1 2 domain. The Extracellular portion of the chain corresponds to 889-932 (GLWIISGLAINTGSQTNDTSTDLSHLSVFSKFITNGSHYYIFYI). N-linked (GlcNAc...) asparagine glycans are attached at residues N905 and N923. The chain crosses the membrane as a discontinuously helical span at residues 933-953 (YVGLADSFLALGVIRGLPLVH). Residues 954–1004 (TLVTVSKDLHKQMLHSVLQGPMTAFNKMKAGRILNRFIKDTAIIDDMLPLT) lie on the Cytoplasmic side of the membrane. The helical transmembrane segment at 1005–1025 (VFDFVQLILIVVGAICVVSVL) threads the bilayer. At 1026–1027 (QP) the chain is on the extracellular side. Residues 1028–1048 (YTLLAAIPVAVIFIMLRAYFL) form a helical membrane-spanning segment. Residues 1049-1109 (RTSQQLKQLE…TANWFLYLST (61 aa)) lie on the Cytoplasmic side of the membrane. Residues 1110-1130 (LRWFQMRIDIVFVLFFIAVTF) traverse the membrane as a helical segment. The Extracellular portion of the chain corresponds to 1131-1144 (IAIATHDVGEGQVG). A helical transmembrane segment spans residues 1145-1165 (IILTLAMNITSTLQWAVNSSI). Residues 1166 to 1492 (DVDGLMRSVS…AEEDLQETRL (327 aa)) lie on the Cytoplasmic side of the membrane. In terms of domain architecture, ABC transporter 2 spans 1220 to 1453 (MMVNNLTAKY…ASLFKQVFGH (234 aa)). ATP-binding positions include Y1229 and 1254–1261 (GRTGAGKS). Residues 1465–1474 (RNSSKRKTRP) are compositionally biased toward basic residues. A disordered region spans residues 1465 to 1492 (RNSSKRKTRPKISALQEEAEEDLQETRL). Residues 1481–1492 (EEAEEDLQETRL) are compositionally biased toward acidic residues. A PDZ-binding motif is present at residues 1483-1485 (AEE).

This sequence belongs to the ABC transporter superfamily. ABCC family. CFTR transporter (TC 3.A.1.202) subfamily. Monomer; does not require oligomerization for channel activity. May form oligomers in the membrane. Phosphorylated; cAMP treatment promotes phosphorylation and activates the channel. Dephosphorylation decreases the ATPase activity (in vitro). Phosphorylation at PKA sites activates the channel. Phosphorylation at PKC sites enhances the response to phosphorylation by PKA. As to expression, expressed in the rectal gland (at protein level).

Its subcellular location is the apical cell membrane. The protein localises to the early endosome membrane. It localises to the cell membrane. The protein resides in the recycling endosome membrane. It is found in the endoplasmic reticulum membrane. The catalysed reaction is ATP + H2O + closed Cl(-) channel = ADP + phosphate + open Cl(-) channel.. It carries out the reaction chloride(in) = chloride(out). The enzyme catalyses hydrogencarbonate(in) = hydrogencarbonate(out). It catalyses the reaction ATP + H2O = ADP + phosphate + H(+). Epithelial ion channel that plays an important role in the regulation of epithelial ion and water transport and fluid homeostasis. Mediates the transport of chloride ions across the cell membrane. Possesses an intrinsic ATPase activity and utilizes ATP to gate its channel; the passive flow of anions through the channel is gated by cycles of ATP binding and hydrolysis by the ATP-binding domains. The ion channel is also permeable to HCO(3)(-); selectivity depends on the extracellular chloride concentration. Exerts its function also by modulating the activity of other ion channels and transporters. Contributes to the regulation of the pH and the ion content of the epithelial fluid layer. This chain is Cystic fibrosis transmembrane conductance regulator, found in Squalus acanthias (Spiny dogfish).